The primary structure comprises 197 residues: Ribonuclease HII (197 aa).

An RNase H type-2 domain is found at 9-197 (ELIAGVDEVG…APVKKALEQF (189 aa)). Positions 15, 16, and 107 each coordinate a divalent metal cation.

Belongs to the RNase HII family. Mn(2+) is required as a cofactor. Requires Mg(2+) as cofactor.

Its subcellular location is the cytoplasm. The enzyme catalyses Endonucleolytic cleavage to 5'-phosphomonoester.. Its function is as follows. Endonuclease that specifically degrades the RNA of RNA-DNA hybrids. The sequence is that of Ribonuclease HII from Haemophilus influenzae (strain PittGG).